The following is a 353-amino-acid chain: Photosystem II D2 protein (353 aa).

The residue at position 2 (Thr-2) is an N-acetylthreonine. Thr-2 carries the post-translational modification Phosphothreonine. The chain crosses the membrane as a helical span at residues 41 to 61 (CAYFALGGWFTGTTFVTSWYT). Residue His-118 participates in chlorophyll a binding. The chain crosses the membrane as a helical span at residues 125-141 (GFMLRQFELARSVQLRP). Residues Gln-130 and Asn-143 each coordinate pheophytin a. The helical transmembrane segment at 153-166 (VFVSVFLIYPLGQS) threads the bilayer. His-198 serves as a coordination point for chlorophyll a. Residues 208 to 228 (AALLCAIHGATVENLYFEDGD) form a helical membrane-spanning segment. Residues His-215 and Phe-262 each coordinate a plastoquinone. His-215 is a binding site for Fe cation. His-269 serves as a coordination point for Fe cation. Residues 279-295 (GLWMSALGVVGLALNLR) traverse the membrane as a helical segment.

It belongs to the reaction center PufL/M/PsbA/D family. PSII is composed of 1 copy each of membrane proteins PsbA, PsbB, PsbC, PsbD, PsbE, PsbF, PsbH, PsbI, PsbJ, PsbK, PsbL, PsbM, PsbT, PsbX, PsbY, PsbZ, Psb30/Ycf12, at least 3 peripheral proteins of the oxygen-evolving complex and a large number of cofactors. It forms dimeric complexes. The D1/D2 heterodimer binds P680, chlorophylls that are the primary electron donor of PSII, and subsequent electron acceptors. It shares a non-heme iron and each subunit binds pheophytin, quinone, additional chlorophylls, carotenoids and lipids. There is also a Cl(-1) ion associated with D1 and D2, which is required for oxygen evolution. The PSII complex binds additional chlorophylls, carotenoids and specific lipids. serves as cofactor.

It is found in the plastid. The protein localises to the chloroplast thylakoid membrane. It catalyses the reaction 2 a plastoquinone + 4 hnu + 2 H2O = 2 a plastoquinol + O2. In terms of biological role, photosystem II (PSII) is a light-driven water:plastoquinone oxidoreductase that uses light energy to abstract electrons from H(2)O, generating O(2) and a proton gradient subsequently used for ATP formation. It consists of a core antenna complex that captures photons, and an electron transfer chain that converts photonic excitation into a charge separation. The D1/D2 (PsbA/PsbD) reaction center heterodimer binds P680, the primary electron donor of PSII as well as several subsequent electron acceptors. D2 is needed for assembly of a stable PSII complex. The sequence is that of Photosystem II D2 protein from Panax ginseng (Korean ginseng).